The following is a 408-amino-acid chain: uncharacterized protein (408 aa).

Residues 49–77 form a disordered region; the sequence is PRSSPEVQRKATAGENSEVGSPESSLSTS. Residues 62 to 77 are compositionally biased toward polar residues; it reads GENSEVGSPESSLSTS. The F-box domain maps to 124–170; the sequence is SFEFMQLPDTDICQIMSFLDAQSLLNLSQTCSHLRQLCLAHEDNAGK.

This is an uncharacterized protein from Caenorhabditis elegans.